The chain runs to 92 residues: Alpha-conotoxin FrXXA (92 aa).

A signal peptide spans 1 to 24; that stretch reads MPKLEMMLLVLLILPLSYFDSAGG. Positions 25–45 are excised as a propeptide; that stretch reads QAVKVDGHGDGMDRYLQRDDR. Cystine bridges form between cysteine 63-cysteine 72, cysteine 68-cysteine 80, cysteine 73-cysteine 90, and cysteine 78-cysteine 92.

Belongs to the conotoxin D superfamily. As to quaternary structure, homodimer; disulfide-linked. The homodimer contains 10 disulfide bonds. Expressed by the venom duct.

It is found in the secreted. Functionally, alpha-conotoxins act on postsynaptic membranes, they bind to the nicotinic acetylcholine receptors (nAChR) and thus inhibit them. Through its two C-terminal domains, this homodimeric protein would bind to two nAChR allosteric sites, located outside the nAChR C-loop of the principal binding face and at the adjacent binding interface in a clockwise direction. This toxin blocks both neuronal and muscular subtypes: human alpha-7/CHRNA7, human alpha-3-beta-2 (CHRNA3-CHRNB2), human alpha-4-beta-2 (CHRNA4-CHRNB2), mouse adult muscular subtype alpha-1-beta-1-delta-epsilon (CHRNA1-CHRNB1-CHRND-CHRNE), and mouse fetal muscular subtype alpha-1-beta-1-gamma-delta (CHRNA1-CHRNB1-CHRNG-CHRND). Shows different dissociation rates towards the different subtypes, with a very slow rate towards alpha-7 subtype (almost irreversible), followed by the adult muscular subtype, the fetal muscular subtype, alpha-3-beta-2 and alpha-4-beta-2 (almost entirely reversible within a few minutes of washing). This chain is Alpha-conotoxin FrXXA, found in Conus fergusoni (Ferguson's cone).